The chain runs to 555 residues: Glutamine--tRNA ligase (555 aa).

The 'HIGH' region motif lies at 35–45 (PEPNGYLHIGH). ATP-binding positions include 36–38 (EPN) and 42–48 (HIGHAKS). The L-glutamine site is built by D68 and Y213. ATP is bound by residues T232 and 262–263 (RL). Residues 269–273 (ITSKR) carry the 'KMSKS' region motif.

Belongs to the class-I aminoacyl-tRNA synthetase family. Monomer.

It is found in the cytoplasm. It carries out the reaction tRNA(Gln) + L-glutamine + ATP = L-glutaminyl-tRNA(Gln) + AMP + diphosphate. The polypeptide is Glutamine--tRNA ligase (Stutzerimonas stutzeri (strain A1501) (Pseudomonas stutzeri)).